We begin with the raw amino-acid sequence, 38 residues long: GFGCPLNQGACHRHCRSIRRRGGYCAGFFKQTCTCYRN.

3 disulfides stabilise this stretch: C4–C25, C11–C33, and C15–C35.

The protein belongs to the invertebrate defensin family. Type 2 subfamily.

The protein localises to the secreted. Its function is as follows. Dual-function peptide with antimicrobial and potassium channel-blocking activities. Shows inhibitory activity against Gram-positive bacteria such as M.luteus, S.aureus, B.subtilis, and M.luteus as well as methicillin-resistant S.aureus (MIC=0.1-20 uM). Does not act on bacteria by disrupting membranes. Also moderately inhibits Kv1.1/KCNA1, Kv1.2/KCNA2, and Kv1.3/KCNA3 potassium channels. Inhibits potassium channels by interacting with the pore region. Does not show hemolytic activity. This Leiurus hebraeus (Hebrew deathstalker scorpion) protein is 4 kDa defensin.